A 325-amino-acid polypeptide reads, in one-letter code: 7,8-didemethyl-8-hydroxy-5-deazariboflavin synthase (325 aa).

The 241-residue stretch at methionine 1–asparagine 241 folds into the Radical SAM core domain. [4Fe-4S] cluster contacts are provided by cysteine 15, cysteine 19, and cysteine 22.

This sequence belongs to the radical SAM superfamily. CofG family. As to quaternary structure, consists of two subunits, CofG and CofH. It depends on [4Fe-4S] cluster as a cofactor.

It carries out the reaction 5-amino-5-(4-hydroxybenzyl)-6-(D-ribitylimino)-5,6-dihydrouracil + S-adenosyl-L-methionine = 7,8-didemethyl-8-hydroxy-5-deazariboflavin + 5'-deoxyadenosine + L-methionine + NH4(+) + H(+). The protein operates within cofactor biosynthesis; coenzyme F0 biosynthesis. Functionally, catalyzes the radical-mediated synthesis of 7,8-didemethyl-8-hydroxy-5-deazariboflavin from 5-amino-5-(4-hydroxybenzyl)-6-(D-ribitylimino)-5,6-dihydrouracil. This Methanosarcina barkeri (strain Fusaro / DSM 804) protein is 7,8-didemethyl-8-hydroxy-5-deazariboflavin synthase.